The sequence spans 243 residues: MTTSSIEPRNSYKRVMLKLGGEMFGGGKVGIDPDVVDNVARQIAEVAKSGAEIAVVIGGGNFFRGAELQQRGMDRARSDYMGMLGTVMNCLALQDFLGQHGVECRVQTAINMAQVAEPYLPLRAERHLEKGRVVIFGAGMGMPYFSTDTTAAQRALEIGCDVLLMAKAVDGVYSADPRTNPDAELFTEITPKEVIEKSLKVADATAFSLCMDNNMPILVFNLLTDGNIARAVNGERIGTLVQS.

18–21 is a binding site for ATP; it reads KLGG. A UMP-binding site is contributed by Gly-59. 2 residues coordinate ATP: Gly-60 and Arg-64. UMP is bound by residues Asp-79 and 140 to 147; that span reads MGMPYFST. Positions 173 and 176 each coordinate ATP.

This sequence belongs to the UMP kinase family. Homohexamer.

It localises to the cytoplasm. The catalysed reaction is UMP + ATP = UDP + ADP. It functions in the pathway pyrimidine metabolism; CTP biosynthesis via de novo pathway; UDP from UMP (UMPK route): step 1/1. With respect to regulation, inhibited by UTP. Functionally, catalyzes the reversible phosphorylation of UMP to UDP. The protein is Uridylate kinase of Corynebacterium efficiens (strain DSM 44549 / YS-314 / AJ 12310 / JCM 11189 / NBRC 100395).